We begin with the raw amino-acid sequence, 224 residues long: uncharacterized protein (224 aa).

3 N-linked (GlcNAc...) asparagine glycosylation sites follow: asparagine 10, asparagine 70, and asparagine 74.

The protein resides in the endoplasmic reticulum. This is an uncharacterized protein from Saccharomyces cerevisiae (strain ATCC 204508 / S288c) (Baker's yeast).